A 92-amino-acid chain; its full sequence is Protein EMB-1 (92 aa).

Composition is skewed to basic and acidic residues over residues 1-16 (MASQQEKKELDARARQ), 37-61 (AEGRSKGGQTRKEQLGGEGYHEMGR), and 72-92 (GGERAEQEGIDIDESKFRTKK). The interval 1 to 92 (MASQQEKKEL…IDESKFRTKK (92 aa)) is disordered.

This sequence belongs to the small hydrophilic plant seed protein family. In terms of tissue distribution, expressed in embryogenic cells, somatic embryos and seeds at the later stages of development. In the embryos, expressed in the procambium, the root and shoot meristem and the protoderm of the cotyledons. Not detected in the endosperm or the aleurone layer, in young leaves or roots.

It is found in the nucleus. The sequence is that of Protein EMB-1 from Daucus carota (Wild carrot).